The sequence spans 225 residues: Ribose-5-phosphate isomerase A (225 aa).

Residues Thr-33–Thr-36, Asp-86–Asp-89, and Lys-99–Gly-102 each bind substrate. Catalysis depends on Glu-108, which acts as the Proton acceptor. Lys-126 contributes to the substrate binding site.

This sequence belongs to the ribose 5-phosphate isomerase family. As to quaternary structure, homodimer.

It carries out the reaction aldehydo-D-ribose 5-phosphate = D-ribulose 5-phosphate. It functions in the pathway carbohydrate degradation; pentose phosphate pathway; D-ribose 5-phosphate from D-ribulose 5-phosphate (non-oxidative stage): step 1/1. In terms of biological role, catalyzes the reversible conversion of ribose-5-phosphate to ribulose 5-phosphate. This is Ribose-5-phosphate isomerase A from Bordetella petrii (strain ATCC BAA-461 / DSM 12804 / CCUG 43448).